The sequence spans 168 residues: Troponin I, cardiac muscle (168 aa).

Basic and acidic residues predominate over residues 128-147 (VRKDDAEKESREVGDWRKNV). The disordered stretch occupies residues 128 to 168 (VRKDDAEKESREVGDWRKNVDALSGMEGRKKKFEAPGGGQG).

The protein belongs to the troponin I family. As to quaternary structure, binds to actin and tropomyosin.

Functionally, troponin I is the inhibitory subunit of troponin, the thin filament regulatory complex which confers calcium-sensitivity to striated muscle actomyosin ATPase activity. The polypeptide is Troponin I, cardiac muscle (TNNI3) (Gallus gallus (Chicken)).